A 233-amino-acid polypeptide reads, in one-letter code: CDP-diacylglycerol--glycerol-3-phosphate 3-phosphatidyltransferase 2 (233 aa).

The segment at 1–23 (MGEEDTATVDQNSFGGGKDSLLR) is disordered. A run of 5 helical transmembrane segments spans residues 40–60 (VITL…ILVA), 71–91 (TATT…GYIA), 100–120 (FGAF…LILL), 125–145 (MVAV…IAII), and 201–221 (LPSG…SLVV).

This sequence belongs to the CDP-alcohol phosphatidyltransferase class-I family. Mn(2+) is required as a cofactor.

Its subcellular location is the microsome membrane. It localises to the endoplasmic reticulum membrane. It carries out the reaction a CDP-1,2-diacyl-sn-glycerol + sn-glycerol 3-phosphate = a 1,2-diacyl-sn-glycero-3-phospho-(1'-sn-glycero-3'-phosphate) + CMP + H(+). It functions in the pathway phospholipid metabolism; phosphatidylglycerol biosynthesis; phosphatidylglycerol from CDP-diacylglycerol: step 1/2. Its function is as follows. Catalyzes the committed step to the synthesis of the acidic phospholipids, including phosphatidylglycerol (PG). Together with PGPS1, required for the proper embryo development by providing PG accurate levels. The protein is CDP-diacylglycerol--glycerol-3-phosphate 3-phosphatidyltransferase 2 of Arabidopsis thaliana (Mouse-ear cress).